Consider the following 159-residue polypeptide: MNISIISVGKIKEKFLRAAIDEYSKRLSKYCKLNIIEVTDEKTPDNASLKEENIIREKEGSLILKHIKDNNFVIAIDLKGKSIASEEFSDLIENCRLTGNSTIAFVIGGSLGLSQQVLSRANYKLSFSKMTFPHQLFRVMLLEQVYRAFRILCGEPYHK.

S-adenosyl-L-methionine-binding positions include Ile-76, Gly-108, and 127–132 (FSKMTF).

It belongs to the RNA methyltransferase RlmH family. In terms of assembly, homodimer.

The protein localises to the cytoplasm. The catalysed reaction is pseudouridine(1915) in 23S rRNA + S-adenosyl-L-methionine = N(3)-methylpseudouridine(1915) in 23S rRNA + S-adenosyl-L-homocysteine + H(+). Specifically methylates the pseudouridine at position 1915 (m3Psi1915) in 23S rRNA. The polypeptide is Ribosomal RNA large subunit methyltransferase H (Clostridium botulinum (strain Loch Maree / Type A3)).